Consider the following 526-residue polypeptide: MVAKDYPFYLTVKRANCSLELPPASGPAKDAEEPSNKRVKPLSRVTSLANLIPPVKATPLKRFSQTLQRSISFRSESRPDILAPRPWSRNAAPSSTKRRDSKLWSETFDVCVNQMLTSKEIKRQEAIFELSQGEEDLIEDLKLAKKAYHDPMLKLSIMTEQELNQIFGTLDSLIPLHEELLSQLRDVRKPDGSTEHVGPILVGWLPCLSSYDSYCSNQVAAKALLDHKKQDHRVQDFLQRCLESPFSRKLDLWNFLDIPRSRLVKYPLLLREILRHTPNDNPDQQHLEEAINIIQGIVAEINTKTGESECRYYKERLLYLEEGQKDSLIDSSRVLCCHGELKNNRGVKLHVFLFQEVLVITRAVTHNEQLCYQLYRQPIPVKDLLLEDLQDGEVRLGGSLRGAFSNNERIKNFFRVSFKNGSQSQTHSLQANDTFNKQQWLNCIRQAKETVLCAAGQAGVLDSEGSFLNPTTGSRELQGETKLEQMDQSDSESDCSMDTSEVSLDCEHMEQTDSSCGNSRHGESNV.

Residues 20 to 40 (ELPPASGPAKDAEEPSNKRVK) form a disordered region. A phosphoserine mark is found at S47 and S70. One can recognise a DH domain in the interval 122–304 (KRQEAIFELS…QGIVAEINTK (183 aa)). The PH domain occupies 291–449 (INIIQGIVAE…WLNCIRQAKE (159 aa)). Disordered stretches follow at residues 464-502 (EGSF…TSEV) and 507-526 (EHME…ESNV). The span at 466 to 475 (SFLNPTTGSR) shows a compositional bias: polar residues.

Interacts with RHOA and RHOB.

The protein localises to the cytoplasm. Acts as a guanine nucleotide exchange factor (GEF) for RhoA and RhoB GTPases. This is Rho guanine nucleotide exchange factor 3 (ARHGEF3) from Macaca fascicularis (Crab-eating macaque).